The chain runs to 184 residues: C-phycoerythrin class 1 subunit beta (184 aa).

(2R,3E)-phycoerythrobilin contacts are provided by C50 and C61. At N72 the chain carries N4-methylasparagine. (2R,3E)-phycoerythrobilin is bound by residues C82 and C165.

It belongs to the phycobiliprotein family. Heterodimer of an alpha and a beta chain. In terms of processing, contains three covalently linked bilin chromophores.

The protein localises to the cellular thylakoid membrane. Light-harvesting photosynthetic bile pigment-protein from the phycobiliprotein complex. This chain is C-phycoerythrin class 1 subunit beta (cpeB), found in Synechococcus sp. (strain WH7803).